The sequence spans 185 residues: Lactoylglutathione lyase (185 aa).

Positions 1-22 are disordered; sequence MASEARESPANNPGLSTNRDEA. Positions 27–174 constitute a VOC domain; sequence IMQQTMFRIK…DGYWIEIFDL (148 aa). Positions 30 and 34 each coordinate substrate. Gln-30 serves as a coordination point for Zn(2+). Residue Glu-96 participates in Zn(2+) binding. Substrate-binding positions include Asn-100, Arg-120, His-124, and 154 to 155; that span reads KM. His-124 lines the Zn(2+) pocket. Residue Glu-170 coordinates Zn(2+). Glu-170 functions as the Proton donor/acceptor in the catalytic mechanism.

Belongs to the glyoxalase I family. The cofactor is Zn(2+).

It carries out the reaction (R)-S-lactoylglutathione = methylglyoxal + glutathione. The protein operates within secondary metabolite metabolism; methylglyoxal degradation; (R)-lactate from methylglyoxal: step 1/2. Its function is as follows. Catalyzes the conversion of hemimercaptal, formed from methylglyoxal and glutathione, to S-lactoylglutathione. The protein is Lactoylglutathione lyase of Arabidopsis thaliana (Mouse-ear cress).